We begin with the raw amino-acid sequence, 216 residues long: MASKEEIIAKAKDAITDFDEELAAEVAEEALAAGIDPVELIEKGFTAGMQEVGEQFEQGSLFLPHVLAAAEAMNTGMEVIKPEMEKRKSETKSLGTVVIGTIEGDIHSIGKDIVASMLNIAGFKVVDLGRDVPIKTFVEKAKEVKPQIIASSALMTTTMVNQIQIEEQLKEAGIRDQVKTMVGGAPVTQDWADKIGADLYGESATDVVSKVRAVLL.

One can recognise a B12-binding N-terminal domain in the interval 1-92; that stretch reads MASKEEIIAK…EMEKRKSETK (92 aa). The B12-binding domain maps to 94 to 216; that stretch reads LGTVVIGTIE…VVSKVRAVLL (123 aa). His107 is a binding site for methylcob(III)alamin.

It belongs to the methylamine corrinoid protein family. Can form a complex with MttB.

It participates in one-carbon metabolism; methanogenesis from trimethylamine. In terms of biological role, acts probably as a methyl group carrier between MttB and either MtbA or MtaA. In Methanosarcina acetivorans (strain ATCC 35395 / DSM 2834 / JCM 12185 / C2A), this protein is Trimethylamine corrinoid protein 1 (mttC1).